We begin with the raw amino-acid sequence, 204 residues long: MDSMKDKIRQALVELDIQATEEQIEQWLEYLKLLEKWNKVYNMTAIKKIDDMLVKHLFDSLAVAKYIKGSSTVDVGTGGGLPGVVLAILYPQHQFTLVDSVGKKIMFLKNVKKSLGLDNINPLNIRIENLNGSFDNIISRAFSSVDTFYELCKHFLTKDNQMLAMKGPDLEEQNLVSLPLDIEKHSIKVPFLNAERNLIVMRKK.

S-adenosyl-L-methionine contacts are provided by residues Gly-76, Leu-81, Ile-127–Glu-128, and Arg-140.

The protein belongs to the methyltransferase superfamily. RNA methyltransferase RsmG family.

It is found in the cytoplasm. The catalysed reaction is guanosine(527) in 16S rRNA + S-adenosyl-L-methionine = N(7)-methylguanosine(527) in 16S rRNA + S-adenosyl-L-homocysteine. Specifically methylates the N7 position of guanine in position 527 of 16S rRNA. The protein is Ribosomal RNA small subunit methyltransferase G of Francisella philomiragia subsp. philomiragia (strain ATCC 25017 / CCUG 19701 / FSC 153 / O#319-036).